Reading from the N-terminus, the 214-residue chain is UPF0056 membrane protein aq_540 (214 aa).

6 helical membrane-spanning segments follow: residues 17-37 (FLSLLAIMNPFSSVPVVISLM), 47-67 (VIALKASVYAFFILTFFLISG), 73-93 (FMGITLPAFKVGGGILLFLIA), 122-142 (LIPLAMPLLAGPGSITTVLVL), 153-173 (VALFCAIFLSSFTAFVVYSLS), and 185-205 (INLITRISGILLLAISVQFVV).

This sequence belongs to the UPF0056 (MarC) family.

It localises to the cell membrane. The chain is UPF0056 membrane protein aq_540 from Aquifex aeolicus (strain VF5).